The sequence spans 174 residues: Nucleoside-triphosphatase THEP1 (174 aa).

ATP is bound by residues 7-14 (GRPGSGKS) and 98-105 (CIIIDEIG).

Belongs to the THEP1 NTPase family.

It carries out the reaction a ribonucleoside 5'-triphosphate + H2O = a ribonucleoside 5'-diphosphate + phosphate + H(+). Its function is as follows. Has nucleotide phosphatase activity towards ATP, GTP, CTP, TTP and UTP. May hydrolyze nucleoside diphosphates with lower efficiency. In Methanothermobacter thermautotrophicus (strain ATCC 29096 / DSM 1053 / JCM 10044 / NBRC 100330 / Delta H) (Methanobacterium thermoautotrophicum), this protein is Nucleoside-triphosphatase THEP1.